A 581-amino-acid polypeptide reads, in one-letter code: FAD-linked oxidoreductase easE (581 aa).

The signal sequence occupies residues 1 to 25; that stretch reads MYRLLGPLACLALAWFFTWAPSGRC. N-linked (GlcNAc...) asparagine glycans are attached at residues Asn44 and Asn73. The FAD-binding PCMH-type domain occupies 122–306; that stretch reads HQGRIPLYSA…AQATIRVFPD (185 aa). The N-linked (GlcNAc...) asparagine glycan is linked to Asn369.

It belongs to the oxygen-dependent FAD-linked oxidoreductase family. It depends on FAD as a cofactor.

The protein operates within alkaloid biosynthesis; ergot alkaloid biosynthesis. In terms of biological role, FAD-linked oxidoreductase; part of the gene cluster that mediates the biosynthesis of fungal ergot alkaloid. DmaW catalyzes the first step of ergot alkaloid biosynthesis by condensing dimethylallyl diphosphate (DMAP) and tryptophan to form 4-dimethylallyl-L-tryptophan. The second step is catalyzed by the methyltransferase easF that methylates 4-dimethylallyl-L-tryptophan in the presence of S-adenosyl-L-methionine, resulting in the formation of 4-dimethylallyl-L-abrine. The catalase easC and the FAD-dependent oxidoreductase easE then transform 4-dimethylallyl-L-abrine to chanoclavine-I which is further oxidized by easD in the presence of NAD(+), resulting in the formation of chanoclavine-I aldehyde. Agroclavine dehydrogenase easG then mediates the conversion of chanoclavine-I aldehyde to agroclavine via a non-enzymatic adduct reaction: the substrate is an iminium intermediate that is formed spontaneously from chanoclavine-I aldehyde in the presence of glutathione. Further conversion of agroclavine to paspalic acid is a two-step process involving oxidation of agroclavine to elymoclavine and of elymoclavine to paspalic acid, the second step being performed by the elymoclavine oxidase cloA. However, cloA does not encode a functional enzyme indicating that C.fusiformis terminates its ergot alkaloid pathway at elymoclavine. This Claviceps fusiformis (Ergot fungus) protein is FAD-linked oxidoreductase easE.